We begin with the raw amino-acid sequence, 106 residues long: Large ribosomal subunit protein bL31B (106 aa).

Positions 85–106 (PVQVAEEPVAKGKKKPSLKKKK) are disordered. Residues 95 to 106 (KGKKKPSLKKKK) show a composition bias toward basic residues.

Belongs to the bacterial ribosomal protein bL31 family. Type B subfamily. Part of the 50S ribosomal subunit.

This Chlamydia felis (strain Fe/C-56) (Chlamydophila felis) protein is Large ribosomal subunit protein bL31B.